The sequence spans 257 residues: Enterotoxin type E (257 aa).

The signal sequence occupies residues 1–27; that stretch reads MKKTAFILLLFIALTLTTSPLVNGSEK. Cysteines 120 and 130 form a disulfide. 3 residues coordinate Zn(2+): His211, His249, and Asp251.

It belongs to the staphylococcal/streptococcal toxin family. In terms of assembly, interacts with host MHC class II molecules composed of alpha/HLA-DRA and beta/HLA-DRB1 chains. Interacts with host T-cell receptor beta variable TRBV7-9. Zn(2+) serves as cofactor.

It localises to the secreted. Functionally, staphylococcal enterotoxin that activates the host immune system by binding as unprocessed molecules to major histocompatibility (MHC) complex class II and T-cell receptor (TCR) molecules. In turn, this ternary complex activates a large number of T-lymphocytes initiating a systemic release of pro-inflammatory cytokines. Also causes the intoxication staphylococcal food poisoning syndrome. The chain is Enterotoxin type E (entE) from Staphylococcus aureus.